The following is a 195-amino-acid chain: uncharacterized protein (195 aa).

A signal peptide spans 1–20 (MLKFRLILTVLTVLLITVNG). Positions 26–195 (IENKSSTSSS…LHNQYPPQQN (170 aa)) are disordered. N-linked (GlcNAc...) asparagine glycosylation occurs at Asn28. Composition is skewed to low complexity over residues 29–43 (KSSTSSSKSAASKPS) and 74–104 (QSKTAQAQPQPSAQSTNKPSFQNGQQSGGNQ). 2 stretches are compositionally biased toward polar residues: residues 112–123 (DPYQTGSYQGPY) and 151–176 (PKNTVQSGYQQPMPGQQSMQVPNNGP).

As to expression, component of the acid-soluble organic matrix of calcified layers of the shell (at protein level).

It localises to the secreted. This is an uncharacterized protein from Lottia gigantea (Giant owl limpet).